Here is a 63-residue protein sequence, read N- to C-terminus: Prokaryotic ubiquitin-like protein Pup 1 (63 aa).

Basic and acidic residues-rich tracts occupy residues Met-1–Gly-12 and Gly-24–Glu-33. Residues Met-1 to Val-35 form a disordered region. The interval Pro-20 to Tyr-57 is ARC ATPase binding. Residues Gln-25–Glu-51 adopt a coiled-coil conformation. Position 63 is a deamidated glutamine (Gln-63). An Isoglutamyl lysine isopeptide (Gln-Lys) (interchain with K-? in acceptor proteins) cross-link involves residue Gln-63.

Belongs to the prokaryotic ubiquitin-like protein family. Strongly interacts with the proteasome-associated ATPase ARC through a hydrophobic interface; the interacting region of Pup lies in its C-terminal half. There is one Pup binding site per ARC hexamer ring. In terms of processing, is modified by deamidation of its C-terminal glutamine to glutamate by the deamidase Dop, a prerequisite to the subsequent pupylation process.

The protein operates within protein degradation; proteasomal Pup-dependent pathway. Functionally, protein modifier that is covalently attached to lysine residues of substrate proteins, thereby targeting them for proteasomal degradation. The tagging system is termed pupylation. This Saccharopolyspora erythraea (strain ATCC 11635 / DSM 40517 / JCM 4748 / NBRC 13426 / NCIMB 8594 / NRRL 2338) protein is Prokaryotic ubiquitin-like protein Pup 1.